Consider the following 212-residue polypeptide: Uracil phosphoribosyltransferase (212 aa).

5-phospho-alpha-D-ribose 1-diphosphate-binding positions include Arg-78, Arg-103, and 130-138 (DPMLATGGS). Residues Ile-193 and 198–200 (GDA) each bind uracil. Asp-199 contacts 5-phospho-alpha-D-ribose 1-diphosphate.

This sequence belongs to the UPRTase family. Mg(2+) is required as a cofactor.

It catalyses the reaction UMP + diphosphate = 5-phospho-alpha-D-ribose 1-diphosphate + uracil. It participates in pyrimidine metabolism; UMP biosynthesis via salvage pathway; UMP from uracil: step 1/1. Its activity is regulated as follows. Allosterically activated by GTP. Functionally, catalyzes the conversion of uracil and 5-phospho-alpha-D-ribose 1-diphosphate (PRPP) to UMP and diphosphate. The protein is Uracil phosphoribosyltransferase of Pseudomonas paraeruginosa (strain DSM 24068 / PA7) (Pseudomonas aeruginosa (strain PA7)).